The following is a 208-amino-acid chain: ATP synthase subunit beta, chloroplastic (208 aa).

Belongs to the ATPase alpha/beta chains family. In terms of assembly, F-type ATPases have 2 components, CF(1) - the catalytic core - and CF(0) - the membrane proton channel. CF(1) has five subunits: alpha(3), beta(3), gamma(1), delta(1), epsilon(1). CF(0) has four main subunits: a(1), b(1), b'(1) and c(9-12).

It is found in the plastid. The protein resides in the chloroplast thylakoid membrane. It catalyses the reaction ATP + H2O + 4 H(+)(in) = ADP + phosphate + 5 H(+)(out). Functionally, produces ATP from ADP in the presence of a proton gradient across the membrane. The catalytic sites are hosted primarily by the beta subunits. This chain is ATP synthase subunit beta, chloroplastic (atpB), found in Hypolepis hostilis (Fern).